The primary structure comprises 227 residues: MAHPVQLGLQDATSPVMEELITFHDHALMAMSLISLLVLYALFSTLTTKLTNTNITDAQEMEIIWTILPAIILVLIALPSLRILYLTDEVNNPSFTIKSIGHQWYWTYEYTDYGGLIFNSYMLPPLFLNPGDLRLLEVDNRVVLPIEAPVRMMITSQDVLHSWTIPTLGLKTDAVPGRLNQTVFTATRPGVYYGQCSEICGANHSFMPIVAELIPLKIFEMGPVFTL.

Over 1 to 14 the chain is Mitochondrial intermembrane; it reads MAHPVQLGLQDATS. The chain crosses the membrane as a helical span at residues 15-45; the sequence is PVMEELITFHDHALMAMSLISLLVLYALFST. The Mitochondrial matrix segment spans residues 46 to 59; it reads LTTKLTNTNITDAQ. A helical transmembrane segment spans residues 60–87; sequence EMEIIWTILPAIILVLIALPSLRILYLT. The Mitochondrial intermembrane portion of the chain corresponds to 88–227; it reads DEVNNPSFTI…IFEMGPVFTL (140 aa). Cu cation-binding residues include His-161, Cys-196, Glu-198, Cys-200, His-204, and Met-207. Glu-198 contacts Mg(2+).

The protein belongs to the cytochrome c oxidase subunit 2 family. Component of the cytochrome c oxidase (complex IV, CIV), a multisubunit enzyme composed of 14 subunits. The complex is composed of a catalytic core of 3 subunits MT-CO1, MT-CO2 and MT-CO3, encoded in the mitochondrial DNA, and 11 supernumerary subunits COX4I, COX5A, COX5B, COX6A, COX6B, COX6C, COX7A, COX7B, COX7C, COX8 and NDUFA4, which are encoded in the nuclear genome. The complex exists as a monomer or a dimer and forms supercomplexes (SCs) in the inner mitochondrial membrane with NADH-ubiquinone oxidoreductase (complex I, CI) and ubiquinol-cytochrome c oxidoreductase (cytochrome b-c1 complex, complex III, CIII), resulting in different assemblies (supercomplex SCI(1)III(2)IV(1) and megacomplex MCI(2)III(2)IV(2)). Found in a complex with TMEM177, COA6, COX18, COX20, SCO1 and SCO2. Interacts with TMEM177 in a COX20-dependent manner. Interacts with COX20. Interacts with COX16. Requires Cu cation as cofactor.

It localises to the mitochondrion inner membrane. The catalysed reaction is 4 Fe(II)-[cytochrome c] + O2 + 8 H(+)(in) = 4 Fe(III)-[cytochrome c] + 2 H2O + 4 H(+)(out). Its function is as follows. Component of the cytochrome c oxidase, the last enzyme in the mitochondrial electron transport chain which drives oxidative phosphorylation. The respiratory chain contains 3 multisubunit complexes succinate dehydrogenase (complex II, CII), ubiquinol-cytochrome c oxidoreductase (cytochrome b-c1 complex, complex III, CIII) and cytochrome c oxidase (complex IV, CIV), that cooperate to transfer electrons derived from NADH and succinate to molecular oxygen, creating an electrochemical gradient over the inner membrane that drives transmembrane transport and the ATP synthase. Cytochrome c oxidase is the component of the respiratory chain that catalyzes the reduction of oxygen to water. Electrons originating from reduced cytochrome c in the intermembrane space (IMS) are transferred via the dinuclear copper A center (CU(A)) of subunit 2 and heme A of subunit 1 to the active site in subunit 1, a binuclear center (BNC) formed by heme A3 and copper B (CU(B)). The BNC reduces molecular oxygen to 2 water molecules using 4 electrons from cytochrome c in the IMS and 4 protons from the mitochondrial matrix. The chain is Cytochrome c oxidase subunit 2 (MT-CO2) from Cercocebus galeritus (Tana river mangabey).